The primary structure comprises 213 residues: Orotate phosphoribosyltransferase (213 aa).

Residue Lys26 participates in 5-phospho-alpha-D-ribose 1-diphosphate binding. Residue 34-35 (FF) coordinates orotate. 5-phospho-alpha-D-ribose 1-diphosphate-binding positions include 72–73 (YK), Arg98, Lys99, Lys102, His104, and 123–131 (DDVISAGTS). Orotate is bound by residues Ser127 and Arg155.

The protein belongs to the purine/pyrimidine phosphoribosyltransferase family. PyrE subfamily. As to quaternary structure, homodimer. Requires Mg(2+) as cofactor.

It carries out the reaction orotidine 5'-phosphate + diphosphate = orotate + 5-phospho-alpha-D-ribose 1-diphosphate. Its pathway is pyrimidine metabolism; UMP biosynthesis via de novo pathway; UMP from orotate: step 1/2. Its function is as follows. Catalyzes the transfer of a ribosyl phosphate group from 5-phosphoribose 1-diphosphate to orotate, leading to the formation of orotidine monophosphate (OMP). The protein is Orotate phosphoribosyltransferase of Laribacter hongkongensis (strain HLHK9).